The primary structure comprises 375 residues: cAMP-dependent protein kinase regulatory subunit (375 aa).

Positions 28-142 (RFCADYFNER…SLYKSVSHNF (115 aa)) are dimerization and phosphorylation. The segment covering 41–50 (REEADDDGPR) has biased composition (basic and acidic residues). A disordered region spans residues 41 to 102 (REEADDDGPR…EPAAPFTRRT (62 aa)). Residues 64 to 82 (GSSSRSTDGSLFRSSFADT) are compositionally biased toward polar residues. Positions 83-97 (SSEGPGSASSEPAAP) are enriched in low complexity. S103 carries the phosphoserine modification. 3',5'-cyclic AMP-binding positions include 143 to 258 (LFGN…FLKE), E208, R217, 261 to 375 (ILSD…DPTK), E328, and R337.

This sequence belongs to the cAMP-dependent kinase regulatory chain family. Tetramer, composed of 2 regulatory (R) and 2 catalytic (C) subunits. In the presence of cAMP it dissociates into 2 active monomeric C subunits and an R dimer.

This Yarrowia lipolytica (strain CLIB 122 / E 150) (Yeast) protein is cAMP-dependent protein kinase regulatory subunit (PKAR).